A 397-amino-acid polypeptide reads, in one-letter code: Sexual differentiation process protein isp7 (397 aa).

The region spanning 255–353 (PTTSIRLLRY…RYTIPFFLQG (99 aa)) is the Fe2OG dioxygenase domain.

It belongs to the iron/ascorbate-dependent oxidoreductase family.

The polypeptide is Sexual differentiation process protein isp7 (isp7) (Schizosaccharomyces pombe (strain 972 / ATCC 24843) (Fission yeast)).